We begin with the raw amino-acid sequence, 122 residues long: Small ribosomal subunit protein bS6 (122 aa).

The protein belongs to the bacterial ribosomal protein bS6 family.

Functionally, binds together with bS18 to 16S ribosomal RNA. In Neisseria meningitidis serogroup C (strain 053442), this protein is Small ribosomal subunit protein bS6.